Reading from the N-terminus, the 574-residue chain is MNLKNTIKKDIQDALIKIAIINCDPVITLNKKTKIGHYQLNNLIKIANISNLKPFELANRIILNIKKKYMYKEITFSQPGFINFLINPYWISEQLEKIFLSPRLGINHVNAQNIVIDYSSPNIAKEMHIGHLRSTIIGDVMARILDFLGHNVIRANHIGDWGTQFGMLIAYLEVKKLVNSPLSLMKLEEYYCKAKKKYDIDQLFAEKSREYVVKLQNGDQYCYSIWKKLVSITMLENCKIYKRLHVTLKKKHTMGESIYNKMLPNIIEDLKNKKIAIEKNGSTIVFLKEFKNRLGEPMGVVIQKKDKGFLYSTTDIACLKYRYQVLHADRIIYYTDSRQHQHLLQAWTIAKKALYISQNLLLEHHIFGMMLSKDKRPFKTRDGDTIKLSALLDEATERAMRLIKNKQPNLSKKKLNQLSNIIGVGAVKYADLSKNRNTNYIFDWNEMLSFEGNTAPYIQYAYTRIVSILKKSNMPIKKLKEKIFLTKESEINLAIKILEFEEIILLISQKGTPHILCKYLYHLATSFSHFYENCSILFPKKIKTCKSRLKLSILTAKTLKKGLNMLGIRVVKKM.

Positions 121–131 (PNIAKEMHIGH) match the 'HIGH' region motif.

It belongs to the class-I aminoacyl-tRNA synthetase family. In terms of assembly, monomer.

It localises to the cytoplasm. It carries out the reaction tRNA(Arg) + L-arginine + ATP = L-arginyl-tRNA(Arg) + AMP + diphosphate. The polypeptide is Arginine--tRNA ligase (Buchnera aphidicola subsp. Acyrthosiphon pisum (strain Tuc7)).